The sequence spans 971 residues: Reversion-inducing cysteine-rich protein with Kazal motifs (971 aa).

Residues Met1–Ala22 form the signal peptide. A Knot 1 repeat occupies Cys37–Cys84. A 5 X Knot repeats region spans residues Cys37 to Cys338. Asn39 and Asn86 each carry an N-linked (GlcNAc...) asparagine glycan. 2 Knot repeats span residues Cys104 to Cys141 and Cys151 to Cys197. Asn200 is a glycosylation site (N-linked (GlcNAc...) asparagine). Knot repeat units lie at residues Cys216 to Cys263 and Cys292 to Cys338. Asn297 and Asn352 each carry an N-linked (GlcNAc...) asparagine glycan. Kazal-like domains follow at residues Thr627–Ser673, Thr698–Pro752, and Phe753–Ala789. Intrachain disulfides connect Cys633–Cys658, Cys635–Cys654, Cys643–Cys671, Cys716–Cys735, Cys724–Cys750, and Cys761–Cys787. Ser942 is lipidated: GPI-anchor amidated serine. Residues Ala943–Asn971 constitute a propeptide, removed in mature form.

The protein belongs to the RECK family. Interacts (via knot repeats) with WNT7A (via disordered linker region); the interaction is direct. Interacts (via knot repeats) with WNT7B (via disordered linker region); the interaction is direct. Interacts with ADGRA2; the interaction is direct. Interacts with MMP9. Post-translationally, N-glycosylated. Expressed in various tissues and untransformed cells. It is undetectable in tumor-derived cell lines and oncogenically transformed cells.

It is found in the cell membrane. Functionally, functions together with ADGRA2 to enable brain endothelial cells to selectively respond to Wnt7 signals (WNT7A or WNT7B). Plays a key role in Wnt7-specific responses: required for central nervous system (CNS) angiogenesis and blood-brain barrier regulation. Acts as a Wnt7-specific coactivator of canonical Wnt signaling by decoding Wnt ligands: acts by interacting specifically with the disordered linker region of Wnt7, thereby conferring ligand selectivity for Wnt7. ADGRA2 is then required to deliver RECK-bound Wnt7 to frizzled by assembling a higher-order RECK-ADGRA2-Fzd-LRP5-LRP6 complex. Also acts as a serine protease inhibitor: negatively regulates matrix metalloproteinase-9 (MMP9) by suppressing MMP9 secretion and by direct inhibition of its enzymatic activity. Also inhibits metalloproteinase activity of MMP2 and MMP14 (MT1-MMP). This Homo sapiens (Human) protein is Reversion-inducing cysteine-rich protein with Kazal motifs.